The primary structure comprises 234 residues: MANLCKRVVDLEKYIVKEAPPTVYYIPDFISEAEEEFLLQQVYRAPKPKWTQLSGRRLQNWGGLPNPKGMLAEKLPDWLLEYTEKISALGAFAGKTANHVLVNEYKPGEGIMPHEDGPLYHPTVTTITVGSHTLLDFYRPVCQAEPDAPQTEESRYMLSLLVQRKSLLILQDDMYKCYLHGIRGVCEDVLSEHVVNISSTGAQVGDTLPRSTRVSLTIRHVPKIIRANLFLGKK.

Residues 96-222 (TANHVLVNEY…RVSLTIRHVP (127 aa)) enclose the Fe2OG dioxygenase domain. Asn-103 and Tyr-105 together coordinate 2-oxoglutarate. Residues His-114, Asp-116, and His-180 each contribute to the Fe cation site. Residues Arg-213 and Ser-215 each contribute to the 2-oxoglutarate site.

The protein belongs to the alkB family. The cofactor is Fe(2+).

Its subcellular location is the cytoplasm. It localises to the nucleus. Its function is as follows. Probable Fe(2+)/2-oxoglutarate-dependent dioxygenase involved in oxidative demethylation of nucleic acids. Binds nucleic acids with a preference for ssDNA or ssRNA to other types of DNAs. May play a role in nucleic acid damage repair. The polypeptide is Probable RNA/DNA demethylase ALKBH6 (alkbh6) (Danio rerio (Zebrafish)).